Reading from the N-terminus, the 32-residue chain is Alcohol dehydrogenase-related 31 kDa protein (32 aa).

Residue 11 to 32 coordinates NAD(+); it reads YVADCGGIALETSXVLMTKNIA.

It belongs to the short-chain dehydrogenases/reductases (SDR) family.

This is Alcohol dehydrogenase-related 31 kDa protein (Adhr) from Drosophila yakuba (Fruit fly).